The following is a 263-amino-acid chain: MEPNRAFHEAPLPLFAPAPGSAGDEAPLAGAASVACGTRPPSYIADHRARLRERFMQGGAAAMPDYELLELVLFRAIPRQDVKPLARRLLDRFGDFNRVLSAPPARLAEVSGLGPAVLQELKIVEAAAQRLARSRVMHRPVLTSWDALLDYCHTAMAHGEIEQFRVLYLDRKNVLIADEEQARGTVDHVPVYPREIMRRALELSASALILVHNHPSGDPTPSQADIGMTNRIVAAAEVMGIAVHDHLIIGRSRELSFRSEGLL.

An MPN domain is found at 141–263; that stretch reads VLTSWDALLD…ELSFRSEGLL (123 aa). Residues H212, H214, and D225 each coordinate Zn(2+). The JAMM motif signature appears at 212 to 225; sequence HNHPSGDPTPSQAD.

Belongs to the UPF0758 family.

The chain is UPF0758 protein Pden_2304 from Paracoccus denitrificans (strain Pd 1222).